The primary structure comprises 113 residues: U11-theraphotoxin-Hhn1g (113 aa).

An N-terminal signal peptide occupies residues 1–21 (MNTVRVTFLLVFVLAVSLGQA). The propeptide occupies 22 to 74 (DKDENRMEMQEKTEQGKSYLDFAENLLLQKLEELEAKLLEEDSEESRNSRQKR). Positions 61-83 (EEDSEESRNSRQKRCIGEGVPCD) are disordered. 3 cysteine pairs are disulfide-bonded: Cys-75–Cys-90, Cys-82–Cys-95, and Cys-89–Cys-110.

This sequence belongs to the neurotoxin 14 (magi-1) family. 01 (HNTX-16) subfamily. In terms of tissue distribution, expressed by the venom gland.

It is found in the secreted. Probable ion channel inhibitor. This is U11-theraphotoxin-Hhn1g from Cyriopagopus hainanus (Chinese bird spider).